The primary structure comprises 422 residues: Secernin-3 (422 aa).

Positions Met1 to Ser5 are excised as a propeptide. Residue Cys6 is part of the active site. Cys6 carries the post-translational modification Glyoxylic acid (Cys); alternate. A Pyruvic acid (Cys); alternate modification is found at Cys6.

The protein belongs to the peptidase C69 family. Secernin subfamily.

Plays a role in thermal nociception. In Bos taurus (Bovine), this protein is Secernin-3 (SCRN3).